Consider the following 232-residue polypeptide: Ribonuclease 3 (232 aa).

Residues I7–G135 enclose the RNase III domain. Mg(2+) is bound at residue E48. D52 is a catalytic residue. N121 and E124 together coordinate Mg(2+). The active site involves E124. Positions N160–D229 constitute a DRBM domain.

This sequence belongs to the ribonuclease III family. As to quaternary structure, homodimer. Mg(2+) is required as a cofactor.

It localises to the cytoplasm. It catalyses the reaction Endonucleolytic cleavage to 5'-phosphomonoester.. In terms of biological role, digests double-stranded RNA. Involved in the processing of primary rRNA transcript to yield the immediate precursors to the large and small rRNAs (23S and 16S). Processes some mRNAs, and tRNAs when they are encoded in the rRNA operon. Processes pre-crRNA and tracrRNA of type II CRISPR loci if present in the organism. This is Ribonuclease 3 from Chlamydia muridarum (strain MoPn / Nigg).